Here is a 641-residue protein sequence, read N- to C-terminus: Peroxisomal targeting signal 1 receptor (641 aa).

C12 participates in a covalent cross-link: Glycyl cysteine thioester (Cys-Gly) (interchain with G-Cter in ubiquitin). Residues 12–34 (CSEPNALGNFVQHFTNERSYHDK) form an amphipathic helix 1 (AH1) region. The amphipathic helix 2 (AH2) stretch occupies residues 74–92 (HLMMDRHLNLRDGPREHKE). The interval 261-288 (VEAAWDETARRTISDITRPITQINDPKL) is amphipathic helix 4 (AH4). The WxxxF/Y motif motif lies at 331 to 335 (WTEDY). TPR repeat units follow at residues 359 to 392 (DSDT…NPEN), 393 to 426 (AMAW…DPTN), 427 to 460 (SKAR…TPEY), 503 to 536 (PEVQ…SPTD), 538 to 570 (QLWN…KPSY), and 571 to 604 (VRAR…HPAP).

It belongs to the peroxisomal targeting signal receptor family. In terms of assembly, interacts (via WxxxF/Y and LVxEF motifs) with PEX14; promoting translocation through the PEX13-PEX14 docking complex. Interacts with PEX7, promoting peroxisomal import of proteins containing a C-terminal PTS2-type peroxisomal targeting signal. In terms of processing, monoubiquitinated at Cys-12 by PEX2 during PEX5 passage through the retrotranslocation channel. Cys-12 monoubiquitination acts as a recognition signal for the PEX1-PEX6 complex and is required for PEX5 extraction and export from peroxisomes. When PEX5 recycling is compromised, polyubiquitinated by PEX10 during its passage through the retrotranslocation channel, leading to its degradation.

The protein resides in the cytoplasm. Its subcellular location is the cytosol. It localises to the peroxisome matrix. Functionally, receptor that mediates peroxisomal import of proteins containing a C-terminal PTS1-type tripeptide peroxisomal targeting signal (SKL-type). Binds to cargo proteins containing a PTS1 peroxisomal targeting signal in the cytosol, and translocates them into the peroxisome matrix by passing through the PEX13-PEX14 docking complex along with cargo proteins. PEX5 receptor is then retrotranslocated into the cytosol, leading to release of bound cargo in the peroxisome matrix, and reset for a subsequent peroxisome import cycle. Its function is as follows. In addition to promoting peroxisomal translocation of proteins containing a PTS1 peroxisomal targeting signal, mediates peroxisomal import of proteins containing a C-terminal PTS2-type peroxisomal targeting signal via its interaction with PEX7. Interaction with PEX7 only takes place when PEX7 is associated with cargo proteins containing a PTS2 peroxisomal targeting signal. PEX7 along with PTS2-containing cargo proteins are then translocated through the PEX13-PEX14 docking complex together with PEX5. The chain is Peroxisomal targeting signal 1 receptor (pex5) from Dictyostelium discoideum (Social amoeba).